Here is a 305-residue protein sequence, read N- to C-terminus: UDP-3-O-acyl-N-acetylglucosamine deacetylase (305 aa).

Residues histidine 79, histidine 238, and aspartate 242 each contribute to the Zn(2+) site. Histidine 265 (proton donor) is an active-site residue.

Belongs to the LpxC family. It depends on Zn(2+) as a cofactor.

It catalyses the reaction a UDP-3-O-[(3R)-3-hydroxyacyl]-N-acetyl-alpha-D-glucosamine + H2O = a UDP-3-O-[(3R)-3-hydroxyacyl]-alpha-D-glucosamine + acetate. It participates in glycolipid biosynthesis; lipid IV(A) biosynthesis; lipid IV(A) from (3R)-3-hydroxytetradecanoyl-[acyl-carrier-protein] and UDP-N-acetyl-alpha-D-glucosamine: step 2/6. Catalyzes the hydrolysis of UDP-3-O-myristoyl-N-acetylglucosamine to form UDP-3-O-myristoylglucosamine and acetate, the committed step in lipid A biosynthesis. This is UDP-3-O-acyl-N-acetylglucosamine deacetylase from Shigella dysenteriae serotype 1 (strain Sd197).